Consider the following 196-residue polypeptide: SAGA-associated factor 11 homolog (196 aa).

The SGF11-type zinc finger occupies C102–C123. The tract at residues T140–F196 is disordered. Residues E142–V153 are compositionally biased toward polar residues. Position 172 is a phosphoserine (S172). Low complexity predominate over residues N182–F196.

Belongs to the SGF11 family. Component of some SAGA transcription coactivator-HAT complexes, at least composed of Ada2b, not/nonstop, Pcaf/Gcn5, Sgf11 and Spt3. Within the SAGA complex, Sgf11, e(y)2, and not/nonstop form an additional subcomplex of SAGA called the DUB module (deubiquitination module). Interacts directly with not/nonstop. Interacts with the AMEX complex component xmas-2. Interacts with Cbp80; important for promoter recruitment of Sgf11 that is not associated with the DUB module.

The protein resides in the nucleus. It localises to the nucleoplasm. It is found in the cytoplasm. In terms of biological role, component of the transcription regulatory histone acetylation (HAT) complex SAGA, a multiprotein complex that activates transcription by remodeling chromatin and mediating histone acetylation and deubiquitination. Within the SAGA complex, participates in a subcomplex that specifically deubiquitinates histone H2B. The SAGA complex is recruited to specific gene promoters by activators, where it is required for transcription. Required for nuclear receptor-mediated transactivation. Binds independently on SAGA to promoters in an RNA-dependent manner. Binds to mRNA and is essential for total mRNA export from the nucleus. Required to counteract heterochromatin silencing. Controls the development of neuronal connectivity in visual system by being required for accurate axon targeting in the optic lobe. Required for expression of ecdysone-induced genes such as br/broad. This chain is SAGA-associated factor 11 homolog, found in Drosophila persimilis (Fruit fly).